The primary structure comprises 115 residues: Large ribosomal subunit protein bL19 (115 aa).

The protein belongs to the bacterial ribosomal protein bL19 family.

Functionally, this protein is located at the 30S-50S ribosomal subunit interface and may play a role in the structure and function of the aminoacyl-tRNA binding site. The chain is Large ribosomal subunit protein bL19 from Streptococcus gordonii (strain Challis / ATCC 35105 / BCRC 15272 / CH1 / DL1 / V288).